Consider the following 523-residue polypeptide: Sialate O-acetylesterase (523 aa).

A signal peptide spans 1-23 (MVAPGLVLGLVLPLILWADRSAG). N-linked (GlcNAc...) asparagine glycans are attached at residues asparagine 107, asparagine 138, asparagine 267, asparagine 290, asparagine 401, and asparagine 422.

In terms of tissue distribution, widely expressed with high expression in the testis, prostate, and colon.

The protein localises to the lysosome. The protein resides in the cytoplasm. It catalyses the reaction N-acetyl-9-O-acetylneuraminate + H2O = N-acetylneuraminate + acetate + H(+). The enzyme catalyses an Ac-O-9-sialoglycoconjugate + H2O = a sialoglycoconjugate + acetate + H(+). Its function is as follows. Catalyzes the removal of O-acetyl ester groups from position 9 of the free diacetylated sialate N-acetyl-9-O-acetylneuraminate (Neu5,9Ac2) in the cytosol and of the diacetylated sialate residues of sialylglycoconjugates in the lysosomes. Together with the sialate-O-acetyltransferase they regulate the balance of acetylated sialoglycoconjugates, key players in various processes such as cell-cell interactions, host-pathogen recognition, and tumor antigenicity. The polypeptide is Sialate O-acetylesterase (SIAE) (Homo sapiens (Human)).